A 333-amino-acid chain; its full sequence is MRNGRCLVTPFVTAQRLANLRNTLWNRQQIAFSTTTASSSTSPIQESSSPLSIRFEYGLPLLDVPLPSRNEPCQFTMRPLSDTIGSLCEFLRQEDRGIDYVAVYGTNGVKLATCTSIEHLLQFGSFRLRLNDKFFDVTVPKTGTMPYDSDKLRQLDDLRATVASLHAALCVDEYKLSREKKLLLQLENAETLLAPLHDAKRKIEQECEAHTDRVMWAGFAAMGVQTGLFARLTWWEYSWDIMEPVTYFATYSTVCATFGYYLYTQQSFEYPSARERVYTKQFYRRAQKQNFDIEKYNRLVTEVDELRNQLKRMRDPLFQHLPVSYLSNLEAEK.

The transit peptide at 1 to 22 directs the protein to the mitochondrion; it reads MRNGRCLVTPFVTAQRLANLRN. Over 23–214 the chain is Mitochondrial matrix; sequence TLWNRQQIAF…QECEAHTDRV (192 aa). A coiled-coil region spans residues 180–193; sequence KKLLLQLENAETLL. Residues 195–213 form an outer juxtamembrane helix (OJMH) region; sequence PLHDAKRKIEQECEAHTDR. The chain crosses the membrane as a helical span at residues 215–234; the sequence is MWAGFAAMGVQTGLFARLTW. Over 235–243 the chain is Mitochondrial intermembrane; the sequence is WEYSWDIME. A Selectivity filter motif is present at residues 239–247; it reads WDIMEPVTY. E243 lines the Ca(2+) pocket. The helical transmembrane segment at 244–260 threads the bilayer; sequence PVTYFATYSTVCATFGY. The Mitochondrial matrix segment spans residues 261 to 333; that stretch reads YLYTQQSFEY…SYLSNLEAEK (73 aa). Residues 262-271 form an inner juxtamembrane helix (IJMH) region; the sequence is LYTQQSFEYP. Residues 289–316 are a coiled coil; that stretch reads QNFDIEKYNRLVTEVDELRNQLKRMRDP.

This sequence belongs to the MCU (TC 1.A.77) family.

It is found in the mitochondrion inner membrane. It carries out the reaction Ca(2+)(in) = Ca(2+)(out). Its activity is regulated as follows. Inhibited by ruthenium red or its derivative Ru360; possibly by obstructing the pore. Mitochondrial inner membrane calcium uniporter that mediates calcium uptake into mitochondria. Constitutes a pore-forming and calcium-conducting subunit. Mitochondrial calcium homeostasis plays key roles in cellular physiology and regulates cell bioenergetics, cytoplasmic calcium signals and activation of cell death pathways. Required for rapid mitochondrial calcium uptake and mitochondrial reactive oxygen species (mtROS) production after wounding. In addition, together with mitochondrial calcium regulator micu-1, required for mitochondrial calcium uptake following axon injury in PLM touch receptor neurons. This Caenorhabditis elegans protein is Calcium uniporter protein, mitochondrial.